Reading from the N-terminus, the 447-residue chain is DNA primase DnaG (447 aa).

Residues 200 to 274 (DSIIVVEGRA…DIDYVARAPE (75 aa)) form the Toprim domain. Positions 206, 248, and 250 each coordinate Mg(2+). The tract at residues 316–339 (ERRRGGARKQEYTKKGSLNPQPQV) is disordered.

It belongs to the archaeal DnaG primase family. As to quaternary structure, forms a ternary complex with MCM helicase and DNA. Component of the archaeal exosome complex. Requires Mg(2+) as cofactor.

It carries out the reaction ssDNA + n NTP = ssDNA/pppN(pN)n-1 hybrid + (n-1) diphosphate.. RNA polymerase that catalyzes the synthesis of short RNA molecules used as primers for DNA polymerase during DNA replication. Also part of the exosome, which is a complex involved in RNA degradation. Acts as a poly(A)-binding protein that enhances the interaction between heteromeric, adenine-rich transcripts and the exosome. The sequence is that of DNA primase DnaG from Pyrococcus furiosus (strain ATCC 43587 / DSM 3638 / JCM 8422 / Vc1).